A 377-amino-acid polypeptide reads, in one-letter code: Membrane progestin receptor epsilon (377 aa).

The interval 1 to 40 (MPRRLQPRGAGTKGPPAPAPAASGAARNSHSAASRDPPAS) is disordered. Topologically, residues 1 to 86 (MPRRLQPRGA…VLKPTNETLN (86 aa)) are cytoplasmic. Low complexity predominate over residues 9–26 (GAGTKGPPAPAPAASGAA). A helical transmembrane segment spans residues 87–107 (FWTHFIPLLLFLSKFCRLFFL). The Extracellular segment spans residues 108-116 (SGGDVPFHH). Residues 117–137 (PWLLPLWCYASGVLLTFAMSC) form a helical membrane-spanning segment. The Cytoplasmic portion of the chain corresponds to 138 to 162 (TAHVFSCLSLRLRAAFFYLDYASIS). Residues 163–183 (YYGFGSTVAYYYYLLPGLSLL) form a helical membrane-spanning segment. Topologically, residues 184-205 (DARVMTPYLQQRLGWHVDCTRL) are extracellular. Residues 206 to 226 (IAAYRALVLPVAFVLAVACTV) traverse the membrane as a helical segment. The Cytoplasmic portion of the chain corresponds to 227–243 (ACCKSRTDWCTYPFALR). The chain crosses the membrane as a helical span at residues 244–264 (TFVFVMPLSMACPIMLESWLF). Residues 265 to 301 (DLRGENPTLFVHFYRRYFWLVVAAFFNVSKIPERIQP) are Extracellular-facing. Residues 302–322 (GLFDIIGHSHQLFHIFTFLSI) traverse the membrane as a helical segment. The Cytoplasmic segment spans residues 323 to 343 (YDQVYYVEEGLRQFLQAPPAA). Residues 344 to 364 (PTFSGTVGYMLLLVVCLGLVI) form a helical membrane-spanning segment. Residues 365-377 (RKFLNSSEFCSKK) are Extracellular-facing.

Belongs to the ADIPOR family. In terms of assembly, homodimer. Expression levels vary widely in a range of tissues. Expressed in the brain, at high level in the pituitary gland and also in hypothalamus, limbic system, caudate nucleus accumens, pons and olfactory bulb.

Its subcellular location is the cell membrane. Its function is as follows. Plasma membrane progesterone (P4) receptor coupled to G proteins. Seems to act through a G(s) mediated pathway. May be involved in regulating rapid P4 signaling in the nervous system. Also binds dehydroepiandrosterone (DHEA), pregnanolone, pregnenolone and allopregnanolone. The protein is Membrane progestin receptor epsilon of Homo sapiens (Human).